A 191-amino-acid polypeptide reads, in one-letter code: NADH-quinone oxidoreductase subunit B 2 (191 aa).

Residues Cys69, Cys70, Cys134, and Cys164 each contribute to the [4Fe-4S] cluster site.

It belongs to the complex I 20 kDa subunit family. NDH-1 is composed of 14 different subunits. Subunits NuoB, C, D, E, F, and G constitute the peripheral sector of the complex. It depends on [4Fe-4S] cluster as a cofactor.

It localises to the cell inner membrane. It catalyses the reaction a quinone + NADH + 5 H(+)(in) = a quinol + NAD(+) + 4 H(+)(out). Functionally, NDH-1 shuttles electrons from NADH, via FMN and iron-sulfur (Fe-S) centers, to quinones in the respiratory chain. Couples the redox reaction to proton translocation (for every two electrons transferred, four hydrogen ions are translocated across the cytoplasmic membrane), and thus conserves the redox energy in a proton gradient. The polypeptide is NADH-quinone oxidoreductase subunit B 2 (Gluconacetobacter diazotrophicus (strain ATCC 49037 / DSM 5601 / CCUG 37298 / CIP 103539 / LMG 7603 / PAl5)).